Reading from the N-terminus, the 159-residue chain is Ribosome maturation factor RimP (159 aa).

The protein belongs to the RimP family.

It is found in the cytoplasm. Functionally, required for maturation of 30S ribosomal subunits. This is Ribosome maturation factor RimP from Geobacter metallireducens (strain ATCC 53774 / DSM 7210 / GS-15).